We begin with the raw amino-acid sequence, 100 residues long: Urease subunit gamma (100 aa).

The protein belongs to the urease gamma subunit family. In terms of assembly, heterotrimer of UreA (gamma), UreB (beta) and UreC (alpha) subunits. Three heterotrimers associate to form the active enzyme.

The protein localises to the cytoplasm. It carries out the reaction urea + 2 H2O + H(+) = hydrogencarbonate + 2 NH4(+). The protein operates within nitrogen metabolism; urea degradation; CO(2) and NH(3) from urea (urease route): step 1/1. In Yersinia bercovieri, this protein is Urease subunit gamma.